The primary structure comprises 417 residues: Serine hydroxymethyltransferase 3 (417 aa).

(6S)-5,6,7,8-tetrahydrofolate is bound by residues Leu121 and 125–127; that span reads GHL. Position 230 is an N6-(pyridoxal phosphate)lysine (Lys230). Position 355–357 (355–357) interacts with (6S)-5,6,7,8-tetrahydrofolate; sequence SPF.

This sequence belongs to the SHMT family. Homodimer. It depends on pyridoxal 5'-phosphate as a cofactor.

Its subcellular location is the cytoplasm. It carries out the reaction (6R)-5,10-methylene-5,6,7,8-tetrahydrofolate + glycine + H2O = (6S)-5,6,7,8-tetrahydrofolate + L-serine. The protein operates within one-carbon metabolism; tetrahydrofolate interconversion. Its pathway is amino-acid biosynthesis; glycine biosynthesis; glycine from L-serine: step 1/1. Its function is as follows. Catalyzes the reversible interconversion of serine and glycine with tetrahydrofolate (THF) serving as the one-carbon carrier. This reaction serves as the major source of one-carbon groups required for the biosynthesis of purines, thymidylate, methionine, and other important biomolecules. Also exhibits THF-independent aldolase activity toward beta-hydroxyamino acids, producing glycine and aldehydes, via a retro-aldol mechanism. This chain is Serine hydroxymethyltransferase 3, found in Pseudomonas fluorescens (strain Pf0-1).